The sequence spans 215 residues: DNA repair and recombination protein RadB (215 aa).

The protein belongs to the eukaryotic RecA-like protein family. RadB subfamily.

Its function is as follows. Involved in DNA repair and in homologous recombination. May regulate the cleavage reactions of the branch-structured DNA. Has a very weak ATPase activity that is not stimulated by DNA. Binds DNA but does not promote DNA strands exchange. The polypeptide is DNA repair and recombination protein RadB (Methanococcus maripaludis (strain C7 / ATCC BAA-1331)).